A 501-amino-acid polypeptide reads, in one-letter code: O-phosphoseryl-tRNA(Sec) selenium transferase (501 aa).

Residues 1–44 (MNRESFAAGERLVSPAYVRQGCEARRSHEHLIRLLLEKGKCPEN) form a tetramerization region. At Ser-14 the chain carries Phosphoserine. Residue Arg-75 coordinates pyridoxal 5'-phosphate. Positions 96-106 (GRSGDISAVQP) are phosphate loop (P-loop). Substrate-binding residues include Arg-97, Ser-98, and Gln-105. Position 271 (Arg-271) interacts with tRNA. Lys-284 is subject to N6-(pyridoxal phosphate)lysine. Arg-313 contacts substrate. The tRNA site is built by Arg-398 and Lys-463. Residues 474–493 (DKTEDVDIEEMALKLDNVLL) are SLA/LP epitope.

The protein belongs to the SepSecS family. As to quaternary structure, homotetramer formed by a catalytic dimer and a non-catalytic dimer serving as a binding platform that orients tRNASec for catalysis. Each tetramer binds the CCA ends of two tRNAs which point to the active sites of the catalytic dimer. Pyridoxal 5'-phosphate serves as cofactor. Primarily expressed in liver, pancreas, kidney and lung. Overexpressed in PHA-stimulated T-cells.

The protein resides in the cytoplasm. The catalysed reaction is O-phospho-L-seryl-tRNA(Sec) + selenophosphate + H2O = L-selenocysteinyl-tRNA(Sec) + 2 phosphate. It functions in the pathway aminoacyl-tRNA biosynthesis; selenocysteinyl-tRNA(Sec) biosynthesis; selenocysteinyl-tRNA(Sec) from L-seryl-tRNA(Sec) (archaeal/eukaryal route): step 2/2. In terms of biological role, converts O-phosphoseryl-tRNA(Sec) to selenocysteinyl-tRNA(Sec) required for selenoprotein biosynthesis. The sequence is that of O-phosphoseryl-tRNA(Sec) selenium transferase (SEPSECS) from Homo sapiens (Human).